Here is a 435-residue protein sequence, read N- to C-terminus: Trigger factor (435 aa).

The 86-residue stretch at 162 to 247 (GDRINIDYRG…LSGVESSKLP (86 aa)) folds into the PPIase FKBP-type domain.

It belongs to the FKBP-type PPIase family. Tig subfamily.

Its subcellular location is the cytoplasm. The enzyme catalyses [protein]-peptidylproline (omega=180) = [protein]-peptidylproline (omega=0). In terms of biological role, involved in protein export. Acts as a chaperone by maintaining the newly synthesized protein in an open conformation. Functions as a peptidyl-prolyl cis-trans isomerase. The chain is Trigger factor from Nitrosospira multiformis (strain ATCC 25196 / NCIMB 11849 / C 71).